Here is a 2030-residue protein sequence, read N- to C-terminus: Dedicator of cytokinesis protein 3 (2030 aa).

One can recognise an SH3 domain in the interval 6–67; it reads EEEKYGVVIC…PANYIHLKKA (62 aa). A C2 DOCK-type domain is found at 421-599; sequence RNDLYLTLEK…ESFFISTQLS (179 aa). Positions 1228-1635 constitute a DOCKER domain; it reads KSEINKEEMY…LYHEFPGLDK (408 aa). Disordered stretches follow at residues 1641 to 1662, 1734 to 1771, 1849 to 1927, and 1951 to 2030; these read SGTSTPRGNVLASHSPMSPESI, SSSQASPSSSSLSSTHSAPSQMITSAPSSARGSPSLPD, DTPP…ADED, and QPCR…RGEQ. Position 1658 is a phosphoserine (S1658). Over residues 1734 to 1754 the composition is skewed to low complexity; sequence SSSQASPSSSSLSSTHSAPSQ. Polar residues predominate over residues 1755 to 1765; it reads MITSAPSSARG. Over residues 1880 to 1902 the composition is skewed to low complexity; that stretch reads GSNSTLSGSASSGVSSLSESNFG. The span at 1967–1977 shows a compositional bias: pro residues; that stretch reads PMDPPALPPKP. The short motif at 1970-1976 is the SH3-binding element; sequence PPALPPK. Composition is skewed to basic and acidic residues over residues 1984–2001 and 2014–2030; these read ALEHDEGVLLREETERPR and AKEEQARMAWEHGRGEQ.

The protein belongs to the DOCK family. Interacts with presenilin proteins PSEN1 and PSEN2. Interacts with CRK. In normal brains, it is localized in the neuropil, and occasionally in the pyramidal cells, while in Alzheimer disease brains, it is associated with neurofibrillary tangles.

It is found in the cytoplasm. Its function is as follows. Potential guanine nucleotide exchange factor (GEF). GEF proteins activate some small GTPases by exchanging bound GDP for free GTP. Its interaction with presenilin proteins as well as its ability to stimulate Tau/MAPT phosphorylation suggest that it may be involved in Alzheimer disease. Ectopic expression in nerve cells decreases the secretion of amyloid-beta APBA1 protein and lowers the rate of cell-substratum adhesion, suggesting that it may affect the function of some small GTPase involved in the regulation of actin cytoskeleton or cell adhesion receptors. This Homo sapiens (Human) protein is Dedicator of cytokinesis protein 3 (DOCK3).